A 457-amino-acid chain; its full sequence is COBRA-like protein 3 (457 aa).

An N-terminal signal peptide occupies residues Met-1 to Glu-35. 9 N-linked (GlcNAc...) asparagine glycosylation sites follow: Asn-45, Asn-170, Asn-178, Asn-217, Asn-242, Asn-258, Asn-326, Asn-341, and Asn-361. A lipid anchor (GPI-anchor amidated asparagine) is attached at Asn-430. A propeptide spans Ala-431 to Ala-457 (removed in mature form). A helical membrane pass occupies residues Gln-437 to Ala-457.

This sequence belongs to the COBRA family.

It localises to the cell membrane. Its function is as follows. Involved in determining the orientation of cell expansion, probably by playing an important role in cellulose deposition. May act by recruiting cellulose synthesizing complexes to discrete positions on the cell surface. This Oryza sativa subsp. japonica (Rice) protein is COBRA-like protein 3 (BC1L4).